Here is a 313-residue protein sequence, read N- to C-terminus: MPERPSVPRHLLGIEGLSAEQLVPFLDLAESYALLSRSRSAPRDALRGRTVINLFYEDSTRTRTSFELAGKRLGADVINMSVATSSVNKGETLLDTAATLNAMRCDLLVVRHAQSGAPALLSRKVEASVVNAGDGTHEHPTQALLDALTIRRHFGRLEGLTVAICGDVGHSRVARSNIHLLTAFGNRVRLAGPPTLLPGAMAGLGNVELYSDMDRALEGADVVMSLRLQKERMGAGLVPSAREYFHFFGLDRRRLALAKPGALVMHPGPMNRGVEIASDVADSDQSVISEQVEMGVAVRMAVLDRLSRARMPA.

Residues Arg61 and Thr62 each contribute to the carbamoyl phosphate site. Lys89 is a binding site for L-aspartate. Arg111, His139, and Gln142 together coordinate carbamoyl phosphate. 2 residues coordinate L-aspartate: Arg172 and Arg227. Gly268 and Pro269 together coordinate carbamoyl phosphate.

It belongs to the aspartate/ornithine carbamoyltransferase superfamily. ATCase family. In terms of assembly, heterododecamer (2C3:3R2) of six catalytic PyrB chains organized as two trimers (C3), and six regulatory PyrI chains organized as three dimers (R2).

It catalyses the reaction carbamoyl phosphate + L-aspartate = N-carbamoyl-L-aspartate + phosphate + H(+). It participates in pyrimidine metabolism; UMP biosynthesis via de novo pathway; (S)-dihydroorotate from bicarbonate: step 2/3. Functionally, catalyzes the condensation of carbamoyl phosphate and aspartate to form carbamoyl aspartate and inorganic phosphate, the committed step in the de novo pyrimidine nucleotide biosynthesis pathway. The protein is Aspartate carbamoyltransferase catalytic subunit of Gluconobacter oxydans (strain 621H) (Gluconobacter suboxydans).